Reading from the N-terminus, the 355-residue chain is Peptide chain release factor 1 (355 aa).

Glutamine 233 is subject to N5-methylglutamine. A compositionally biased stretch (basic and acidic residues) spans 281 to 293; sequence RRNKEQERADSRR. The tract at residues 281–308 is disordered; that stretch reads RRNKEQERADSRRGQIGSGDRSERIRTY.

Belongs to the prokaryotic/mitochondrial release factor family. In terms of processing, methylated by PrmC. Methylation increases the termination efficiency of RF1.

It is found in the cytoplasm. Functionally, peptide chain release factor 1 directs the termination of translation in response to the peptide chain termination codons UAG and UAA. The sequence is that of Peptide chain release factor 1 from Rickettsia akari (strain Hartford).